The sequence spans 249 residues: Demethylmenaquinone methyltransferase (249 aa).

Residues threonine 67, aspartate 87, and 115-116 (DA) contribute to the S-adenosyl-L-methionine site.

Belongs to the class I-like SAM-binding methyltransferase superfamily. MenG/UbiE family.

It catalyses the reaction a 2-demethylmenaquinol + S-adenosyl-L-methionine = a menaquinol + S-adenosyl-L-homocysteine + H(+). It functions in the pathway quinol/quinone metabolism; menaquinone biosynthesis; menaquinol from 1,4-dihydroxy-2-naphthoate: step 2/2. Its function is as follows. Methyltransferase required for the conversion of demethylmenaquinol (DMKH2) to menaquinol (MKH2). In Leptospira interrogans serogroup Icterohaemorrhagiae serovar copenhageni (strain Fiocruz L1-130), this protein is Demethylmenaquinone methyltransferase.